The following is a 601-amino-acid chain: Tripeptidyl-peptidase SED4 (601 aa).

An N-terminal signal peptide occupies residues Met1–Ala22. Residues Ala23–Thr202 constitute a propeptide, removed in mature form. 2 N-linked (GlcNAc...) asparagine glycosylation sites follow: Asn210 and Asn281. A Peptidase S53 domain is found at Thr212–Tyr601. Catalysis depends on charge relay system residues Glu288 and Asp292. Asn323 is a glycosylation site (N-linked (GlcNAc...) asparagine). Ser504 (charge relay system) is an active-site residue. Ca(2+) is bound by residues Asp546 and Ile547. Asn575 is a glycosylation site (N-linked (GlcNAc...) asparagine). Residues Gly579 and Asp581 each contribute to the Ca(2+) site.

It depends on Ca(2+) as a cofactor.

It localises to the secreted. The protein resides in the extracellular space. The catalysed reaction is Release of an N-terminal tripeptide from a polypeptide.. Its function is as follows. Secreted tripeptidyl-peptidase which degrades proteins at acidic pHs and is involved in virulence. This is Tripeptidyl-peptidase SED4 (SED4) from Arthroderma otae (strain ATCC MYA-4605 / CBS 113480) (Microsporum canis).